The chain runs to 425 residues: UPF0761 membrane protein xcc-b100_3490 (425 aa).

The next 6 helical transmembrane spans lie at 48–68 (VFAL…FPAF), 105–125 (FTVA…HSIE), 154–174 (GTML…LPLF), 182–202 (LAEF…IVLI), 216–236 (ALPG…GFGF), and 250–270 (ALSA…SVLL).

This sequence belongs to the UPF0761 family.

The protein resides in the cell inner membrane. This Xanthomonas campestris pv. campestris (strain B100) protein is UPF0761 membrane protein xcc-b100_3490.